The sequence spans 358 residues: 3-dehydroquinate synthase (358 aa).

NAD(+)-binding positions include 70–75, 104–108, 128–129, K141, K150, and 168–171; these read DGEQFK, GVIGD, TT, and CLHT. Zn(2+) is bound by residues E183, H246, and H263.

Belongs to the sugar phosphate cyclases superfamily. Dehydroquinate synthase family. Co(2+) is required as a cofactor. Requires Zn(2+) as cofactor. It depends on NAD(+) as a cofactor.

It is found in the cytoplasm. The catalysed reaction is 7-phospho-2-dehydro-3-deoxy-D-arabino-heptonate = 3-dehydroquinate + phosphate. It functions in the pathway metabolic intermediate biosynthesis; chorismate biosynthesis; chorismate from D-erythrose 4-phosphate and phosphoenolpyruvate: step 2/7. Catalyzes the conversion of 3-deoxy-D-arabino-heptulosonate 7-phosphate (DAHP) to dehydroquinate (DHQ). The protein is 3-dehydroquinate synthase of Shewanella baltica (strain OS185).